The primary structure comprises 517 residues: Lysine--tRNA ligase (517 aa).

The tract at residues 1–21 is disordered; the sequence is MTEPNRAQAPAQNKAAADTPA. The segment covering 7–20 has biased composition (low complexity); the sequence is AQAPAQNKAAADTP. Mg(2+) is bound by residues glutamate 427 and glutamate 434.

It belongs to the class-II aminoacyl-tRNA synthetase family. Homodimer. It depends on Mg(2+) as a cofactor.

Its subcellular location is the cytoplasm. It catalyses the reaction tRNA(Lys) + L-lysine + ATP = L-lysyl-tRNA(Lys) + AMP + diphosphate. The chain is Lysine--tRNA ligase from Cupriavidus taiwanensis (strain DSM 17343 / BCRC 17206 / CCUG 44338 / CIP 107171 / LMG 19424 / R1) (Ralstonia taiwanensis (strain LMG 19424)).